We begin with the raw amino-acid sequence, 493 residues long: Hexokinase-like 1 protein (493 aa).

Residues alanine 38–alanine 488 form the Hexokinase domain. A hexokinase small subdomain region spans residues serine 93–valine 232. Glycine 107, threonine 108, and asparagine 109 together coordinate ADP. D-glucose contacts are provided by threonine 198, lysine 199, asparagine 233, and aspartate 234. The hexokinase large subdomain stretch occupies residues asparagine 233–aspartate 477. Threonine 257 contributes to the ADP binding site. D-glucose-binding residues include asparagine 260, glutamate 287, and glutamate 317. Alanine 442 contacts ADP.

This sequence belongs to the hexokinase family.

The catalysed reaction is a D-hexose + ATP = a D-hexose 6-phosphate + ADP + H(+). It carries out the reaction D-fructose + ATP = D-fructose 6-phosphate + ADP + H(+). It catalyses the reaction D-glucose + ATP = D-glucose 6-phosphate + ADP + H(+). It functions in the pathway carbohydrate metabolism; hexose metabolism. It participates in carbohydrate degradation; glycolysis; D-glyceraldehyde 3-phosphate and glycerone phosphate from D-glucose: step 1/4. In terms of biological role, fructose and glucose phosphorylating enzyme. The polypeptide is Hexokinase-like 1 protein (Arabidopsis thaliana (Mouse-ear cress)).